Consider the following 188-residue polypeptide: Elongation factor P-like protein (188 aa).

It belongs to the elongation factor P family.

The sequence is that of Elongation factor P-like protein from Alcanivorax borkumensis (strain ATCC 700651 / DSM 11573 / NCIMB 13689 / SK2).